Consider the following 398-residue polypeptide: MKYLTILGSTGSIGTSTLTVIKQNPDKFTVRALVAKNNFTLMTKQCLDFRPSWVGMVDKRAARELKANLAQLGIAINIISGNQAACELAALKEIDTVMAAIAGVDGLLSTLSALRAGKRVLLANKESLVSCGRLFMNEVHQHNAQLLPVDSEHNAIFQILPEPIQRQLGCLSLSKYGVSQIILTGSGGPFRQTPLDALATITSDQACIHPNWSMGRKISVDSATMMNKGLEYIEARCLFNASTDQIEVLLHPQSIFHSMVRYVDGSVLAQLAYPDMRIPITYALSYPTRVPIKVTPLNFLQLGTLSFDQPDNKRYPCLQLAIEASKLGQAATTTLNAANEVAVAAFLQRKIRFTDIASVNQMVLDKINLEEPSSIEEVLCIDRQARINAHLSIRYLAL.

Residues Thr-10, Gly-11, Ser-12, Ile-13, Asn-38, and Asn-124 each contribute to the NADPH site. Position 125 (Lys-125) interacts with 1-deoxy-D-xylulose 5-phosphate. Position 126 (Glu-126) interacts with NADPH. A Mn(2+)-binding site is contributed by Asp-150. Residues Ser-151, Glu-152, Ser-186, and His-209 each contribute to the 1-deoxy-D-xylulose 5-phosphate site. A Mn(2+)-binding site is contributed by Glu-152. Position 215 (Gly-215) interacts with NADPH. 1-deoxy-D-xylulose 5-phosphate contacts are provided by Ser-222, Asn-227, Lys-228, and Glu-231. Residue Glu-231 participates in Mn(2+) binding.

The protein belongs to the DXR family. The cofactor is Mg(2+). Mn(2+) is required as a cofactor.

The catalysed reaction is 2-C-methyl-D-erythritol 4-phosphate + NADP(+) = 1-deoxy-D-xylulose 5-phosphate + NADPH + H(+). It participates in isoprenoid biosynthesis; isopentenyl diphosphate biosynthesis via DXP pathway; isopentenyl diphosphate from 1-deoxy-D-xylulose 5-phosphate: step 1/6. Catalyzes the NADPH-dependent rearrangement and reduction of 1-deoxy-D-xylulose-5-phosphate (DXP) to 2-C-methyl-D-erythritol 4-phosphate (MEP). This is 1-deoxy-D-xylulose 5-phosphate reductoisomerase from Baumannia cicadellinicola subsp. Homalodisca coagulata.